The sequence spans 166 residues: Ribosome maturation factor RimM (166 aa).

The region spanning 95–164 is the PRC barrel domain; the sequence is EEEYYAYELV…KKIIVKEELL (70 aa).

This sequence belongs to the RimM family. Binds ribosomal protein uS19.

The protein localises to the cytoplasm. Functionally, an accessory protein needed during the final step in the assembly of 30S ribosomal subunit, possibly for assembly of the head region. Essential for efficient processing of 16S rRNA. May be needed both before and after RbfA during the maturation of 16S rRNA. It has affinity for free ribosomal 30S subunits but not for 70S ribosomes. The chain is Ribosome maturation factor RimM from Aquifex aeolicus (strain VF5).